Consider the following 138-residue polypeptide: Protein transport protein got1 homolog (138 aa).

The Cytoplasmic segment spans residues Met-1–Lys-7. The chain crosses the membrane as a helical span at residues Ile-8–Leu-28. The Lumenal segment spans residues Asp-29–Arg-30. A helical membrane pass occupies residues Asn-31–Gln-51. Over Lys-52–Lys-62 the chain is Cytoplasmic. The helical transmembrane segment at Ile-63 to Thr-82 threads the bilayer. Residues Phe-83 to Val-87 lie on the Lumenal side of the membrane. Residues Ile-88 to Leu-108 traverse the membrane as a helical segment. Residues Arg-109–Phe-138 are Cytoplasmic-facing.

Belongs to the GOT1 family.

The protein localises to the golgi apparatus membrane. Its function is as follows. May be involved in fusion of ER-derived transport vesicles with the Golgi complex. The protein is Protein transport protein got1 homolog (golt1) of Dictyostelium discoideum (Social amoeba).